Consider the following 178-residue polypeptide: Interleukin-10 (178 aa).

A signal peptide spans 1–18 (MHSSALLCCLVLLTGVRA). 2 cysteine pairs are disulfide-bonded: C30/C126 and C80/C132. N134 carries an N-linked (GlcNAc...) asparagine glycan.

This sequence belongs to the IL-10 family. Homodimer. Interacts with IL10RA and IL10RB.

The protein resides in the secreted. Major immune regulatory cytokine that acts on many cells of the immune system where it has profound anti-inflammatory functions, limiting excessive tissue disruption caused by inflammation. Mechanistically, IL10 binds to its heterotetrameric receptor comprising IL10RA and IL10RB leading to JAK1 and STAT2-mediated phosphorylation of STAT3. In turn, STAT3 translocates to the nucleus where it drives expression of anti-inflammatory mediators. Targets antigen-presenting cells (APCs) such as macrophages and monocytes and inhibits their release of pro-inflammatory cytokines including granulocyte-macrophage colony-stimulating factor /GM-CSF, granulocyte colony-stimulating factor/G-CSF, IL-1 alpha, IL-1 beta, IL-6, IL-8 and TNF-alpha. Also interferes with antigen presentation by reducing the expression of MHC-class II and co-stimulatory molecules, thereby inhibiting their ability to induce T cell activation. In addition, controls the inflammatory response of macrophages by reprogramming essential metabolic pathways including mTOR signaling. The sequence is that of Interleukin-10 (IL10) from Macaca fascicularis (Crab-eating macaque).